Reading from the N-terminus, the 185-residue chain is Pro-adrenomedullin (185 aa).

The N-terminal stretch at 1–21 (MKLVSIALMLLGSLAVLGADT) is a signal peptide. An Arginine amide modification is found at Arg-41. The propeptide occupies 45–91 (ELQASSSYPTGLVDEKTVPTQTLGLQDKQSTSSTPQASTQSTAHIRV). The interval 68–89 (GLQDKQSTSSTPQASTQSTAHI) is disordered. The span at 73-87 (QSTSSTPQASTQSTA) shows a compositional bias: low complexity. A disulfide bond links Cys-107 and Cys-112. Residues 125 to 185 (TDKDKDGMAP…HQDISRVSRL (61 aa)) form a disordered region. Tyr-143 is modified (tyrosine amide). Residues 150–185 (SLPEVLRARTVESSQEQTHSAPASPAHQDISRVSRL) constitute a propeptide, preproAM C-terminal fragment. Residues 160–170 (VESSQEQTHSA) show a composition bias toward polar residues.

It belongs to the adrenomedullin family. Expressed in adrenal glands, lung, kidney, heart, spleen, duodenum and submandibular glands.

It is found in the secreted. Functionally, adrenomedullin/ADM and proadrenomedullin N-20 terminal peptide/PAMP are peptide hormones that act as potent hypotensive and vasodilatator agents. Numerous actions have been reported most related to the physiologic control of fluid and electrolyte homeostasis. ADM function is mediated by the CALCRL-RAMP2 and CALCRL-RAMP3 receptor complexes with ADM showing the highest potency for the CALCRL-RAMP2 complex. This is Pro-adrenomedullin from Rattus norvegicus (Rat).